The chain runs to 827 residues: Periplasmic nitrate reductase (827 aa).

A signal peptide (tat-type signal) is located at residues 1–32 (MNLSRRDFMKANAALAAASVAGLIIPVKNVNA). In terms of domain architecture, 4Fe-4S Mo/W bis-MGD-type spans 37–93 (ITWDKAVCRFCGTGCAVLVGTKDGRVVASQGDPDAEVNRGLNCIKGYFLPKIMYGKD). Positions 44, 47, 51, and 79 each coordinate [4Fe-4S] cluster. Mo-bis(molybdopterin guanine dinucleotide) contacts are provided by residues lysine 81, glutamine 148, asparagine 173, cysteine 177, 210 to 217 (WGSNMAEM), 242 to 246 (STFEH), 261 to 263 (QSD), methionine 372, glutamine 376, asparagine 482, 508 to 509 (SD), lysine 531, aspartate 558, and 717 to 726 (TGRILEHWHT). Phenylalanine 793 serves as a coordination point for substrate. Residues asparagine 801 and lysine 818 each coordinate Mo-bis(molybdopterin guanine dinucleotide).

It belongs to the prokaryotic molybdopterin-containing oxidoreductase family. NasA/NapA/NarB subfamily. Component of the periplasmic nitrate reductase NapAB complex composed of NapA and NapB. [4Fe-4S] cluster serves as cofactor. It depends on Mo-bis(molybdopterin guanine dinucleotide) as a cofactor. In terms of processing, predicted to be exported by the Tat system. The position of the signal peptide cleavage has not been experimentally proven.

The protein localises to the periplasm. It catalyses the reaction 2 Fe(II)-[cytochrome] + nitrate + 2 H(+) = 2 Fe(III)-[cytochrome] + nitrite + H2O. Its function is as follows. Catalytic subunit of the periplasmic nitrate reductase complex NapAB. Receives electrons from NapB and catalyzes the reduction of nitrate to nitrite. The chain is Periplasmic nitrate reductase from Histophilus somni (strain 129Pt) (Haemophilus somnus).